The primary structure comprises 398 residues: Elongation factor Tu (398 aa).

Positions lysine 10–glutamate 207 constitute a tr-type G domain. Positions glycine 19–threonine 26 are G1. Glycine 19–threonine 26 provides a ligand contact to GTP. Position 26 (threonine 26) interacts with Mg(2+). Residues glycine 63 to asparagine 67 are G2. A G3 region spans residues aspartate 84–glycine 87. GTP contacts are provided by residues aspartate 84–histidine 88 and asparagine 139–aspartate 142. Positions asparagine 139–aspartate 142 are G4. The segment at serine 177–leucine 179 is G5.

Belongs to the TRAFAC class translation factor GTPase superfamily. Classic translation factor GTPase family. EF-Tu/EF-1A subfamily. In terms of assembly, monomer.

It localises to the cytoplasm. The catalysed reaction is GTP + H2O = GDP + phosphate + H(+). Its function is as follows. GTP hydrolase that promotes the GTP-dependent binding of aminoacyl-tRNA to the A-site of ribosomes during protein biosynthesis. This chain is Elongation factor Tu, found in Streptococcus agalactiae serotype Ia (strain ATCC 27591 / A909 / CDC SS700).